The sequence spans 427 residues: Aspartate aminotransferase, mitochondrial (427 aa).

A mitochondrion-targeting transit peptide spans 1–26 (MALLKSRLLVGVARCQPCLAAVQGRA). Gly62, Trp159, and Asn212 together coordinate substrate. Lys276 is subject to N6-(pyridoxal phosphate)lysine. Residue Arg404 participates in substrate binding.

This sequence belongs to the class-I pyridoxal-phosphate-dependent aminotransferase family. Homodimer. Pyridoxal 5'-phosphate is required as a cofactor.

The protein localises to the mitochondrion matrix. The catalysed reaction is L-aspartate + 2-oxoglutarate = oxaloacetate + L-glutamate. The enzyme catalyses L-kynurenine + 2-oxoglutarate = kynurenate + L-glutamate + H2O. Functionally, catalyzes the irreversible transamination of the L-tryptophan metabolite L-kynurenine to form kynurenic acid (KA). As a member of the malate-aspartate shuttle, it has a key role in the intracellular NAD(H) redox balance. Is important for metabolite exchange between mitochondria and cytosol, and for amino acid metabolism. This is Aspartate aminotransferase, mitochondrial (got2) from Xenopus tropicalis (Western clawed frog).